The chain runs to 98 residues: MTGPGPRRDEARLSAWVHGHVQGVGFRWWTRARALELGLTGFASNRPDGRVHVVAQGSREACEKLLELLRSGETPGSVDKVIADWAEPDATMTGFSER.

The Acylphosphatase-like domain occupies 12–98; sequence RLSAWVHGHV…DATMTGFSER (87 aa). Active-site residues include Arg27 and Asn45.

The protein belongs to the acylphosphatase family.

It catalyses the reaction an acyl phosphate + H2O = a carboxylate + phosphate + H(+). This is Acylphosphatase (acyP) from Mycolicibacterium smegmatis (strain ATCC 700084 / mc(2)155) (Mycobacterium smegmatis).